Here is a 440-residue protein sequence, read N- to C-terminus: Adenylyltransferase and sulfurtransferase UBA4 (440 aa).

Position 1 is an N-acetylmethionine (Met-1). ATP is bound by residues Gly-77, Asp-98, 105 to 109 (SNLHR), Lys-122, and 166 to 167 (DS). Cys-208 and Cys-211 together coordinate Zn(2+). Cys-225 functions as the Glycyl thioester intermediate; for adenylyltransferase activity in the catalytic mechanism. Zn(2+) is bound by residues Cys-286 and Cys-289. Ser-326 carries the phosphoserine modification. The Rhodanese domain maps to 339–438 (FLAKHIFLDV…YIDDIDQTIP (100 aa)). The active-site Cysteine persulfide intermediate; for sulfurtransferase activity is the Cys-397.

It in the N-terminal section; belongs to the HesA/MoeB/ThiF family. UBA4 subfamily. It depends on Zn(2+) as a cofactor.

Its subcellular location is the cytoplasm. It localises to the cytosol. Its pathway is tRNA modification; 5-methoxycarbonylmethyl-2-thiouridine-tRNA biosynthesis. Plays a central role in 2-thiolation of mcm(5)S(2)U at tRNA wobble positions of cytosolic tRNA(Lys), tRNA(Glu) and tRNA(Gln). Acts by mediating the C-terminal thiocarboxylation of sulfur carrier URM1. Its N-terminus first activates URM1 as acyl-adenylate (-COAMP), then the persulfide sulfur on the catalytic cysteine is transferred to URM1 to form thiocarboxylation (-COSH) of its C-terminus. The reaction probably involves hydrogen sulfide that is generated from the persulfide intermediate and that acts as a nucleophile towards URM1. Subsequently, a transient disulfide bond is formed. Does not use thiosulfate as sulfur donor; NFS1 probably acting as a sulfur donor for thiocarboxylation reactions. Prior mcm(5) tRNA modification by the elongator complex is required for 2-thiolation. May also be involved in protein urmylation. The chain is Adenylyltransferase and sulfurtransferase UBA4 from Saccharomyces cerevisiae (strain RM11-1a) (Baker's yeast).